The primary structure comprises 127 residues: uncharacterized protein (127 aa).

A helical transmembrane segment spans residues 5-25 (ILGITIAFIILLLTTVAILFS).

The protein resides in the membrane. This is an uncharacterized protein from Mycoplasma genitalium (strain ATCC 33530 / DSM 19775 / NCTC 10195 / G37) (Mycoplasmoides genitalium).